Consider the following 155-residue polypeptide: Small ribosomal subunit protein uS7cz/uS7cy (155 aa).

It belongs to the universal ribosomal protein uS7 family. Part of the 30S ribosomal subunit.

The protein resides in the plastid. The protein localises to the chloroplast. Functionally, one of the primary rRNA binding proteins, it binds directly to 16S rRNA where it nucleates assembly of the head domain of the 30S subunit. The polypeptide is Small ribosomal subunit protein uS7cz/uS7cy (rps7-A) (Psilotum nudum (Whisk fern)).